The primary structure comprises 463 residues: Chromosomal replication initiator protein DnaA (463 aa).

The segment at 1–84 (MNTNQIILTN…QLFQHYNNAI (84 aa)) is domain I, interacts with DnaA modulators. The segment at 84 to 124 (IKTVEIITKELPASNQATLELPTKTFADIGSSELNSENIFS) is domain II. The tract at residues 125–343 (TFDIRFTFDN…GALNKVIAHS (219 aa)) is domain III, AAA+ region. The ATP site is built by glycine 171, glycine 173, lysine 174, and threonine 175. A domain IV, binds dsDNA region spans residues 344–463 (NFTAKEITLE…INLMMKILQN (120 aa)).

The protein belongs to the DnaA family. In terms of assembly, oligomerizes as a right-handed, spiral filament on DNA at oriC.

It localises to the cytoplasm. In terms of biological role, plays an essential role in the initiation and regulation of chromosomal replication. ATP-DnaA binds to the origin of replication (oriC) to initiate formation of the DNA replication initiation complex once per cell cycle. Binds the DnaA box (a 9 base pair repeat at the origin) and separates the double-stranded (ds)DNA. Forms a right-handed helical filament on oriC DNA; dsDNA binds to the exterior of the filament while single-stranded (ss)DNA is stabiized in the filament's interior. The ATP-DnaA-oriC complex binds and stabilizes one strand of the AT-rich DNA unwinding element (DUE), permitting loading of DNA polymerase. After initiation quickly degrades to an ADP-DnaA complex that is not apt for DNA replication. Binds acidic phospholipids. The sequence is that of Chromosomal replication initiator protein DnaA from Rickettsia bellii (strain OSU 85-389).